A 66-amino-acid chain; its full sequence is Large ribosomal subunit protein bL33c (66 aa).

This sequence belongs to the bacterial ribosomal protein bL33 family.

Its subcellular location is the plastid. It localises to the chloroplast. The sequence is that of Large ribosomal subunit protein bL33c from Agrostis stolonifera (Creeping bentgrass).